A 213-amino-acid chain; its full sequence is MGADATGDTAARGDRAAHGDTASGGATGGTAGNIATVDLHPSLLPLAFLVGTWRGEGVGGYEGMESFHYGQEITFAADGRPALGYVSHTWWADEPRDGREPGSPMATETGFWRVQPPATEPGPDGKVNGSPVVEVMLAHPFGIAEIYVGTVTGTRIDLDSNVLIRTATAREVTRSVRLYGLIEGGDLAYAIDMEAGGKPLQSHLSARLHRSPS.

Over residues 1 to 10 (MGADATGDTA) the composition is skewed to low complexity. Positions 1–26 (MGADATGDTAARGDRAAHGDTASGGA) are disordered. The GXWXGXG motif lies at 51–57 (GTWRGEG). Heme b is bound at residue His-203.

It belongs to the nitrobindin family. As to quaternary structure, homodimer. The cofactor is heme b.

It catalyses the reaction peroxynitrite = nitrate. Its pathway is nitrogen metabolism. In terms of biological role, heme-binding protein able to scavenge peroxynitrite and to protect free L-tyrosine against peroxynitrite-mediated nitration, by acting as a peroxynitrite isomerase that converts peroxynitrite to nitrate. Therefore, this protein likely plays a role in peroxynitrite sensing and in the detoxification of reactive nitrogen and oxygen species (RNS and ROS, respectively). Is able to bind nitric oxide (NO) in vitro, but may act as a sensor of peroxynitrite levels in vivo. This is Peroxynitrite isomerase from Parafrankia sp. (strain EAN1pec).